Reading from the N-terminus, the 289-residue chain is Secretory carrier-associated membrane protein (289 aa).

Positions 1-65 are disordered; sequence MAGRYDPNPF…TSTDGKKKER (65 aa). Residues 1–123 are Cytoplasmic-facing; sequence MAGRYDPNPF…EIPIHLRTLQ (123 aa). Polar residues predominate over residues 16–31; the sequence is NPFSNPRSAASATNSR. Residues 59–98 are a coiled coil; that stretch reads DGKKKERDLQAKEAELRKREQEVRRKEEAIARAGIVIEEK. 4 helical membrane passes run 124 to 144, 156 to 176, 191 to 211, and 239 to 259; these read YVAF…VVSV, IWFL…ALWY, FGWF…AAVA, and IFYF…IWVI. At 260 to 289 the chain is on the cytoplasmic side; it reads QQVYMHFRGGGKTAEMKREAALGAMGAALR.

This sequence belongs to the SCAMP family.

It is found in the cell membrane. The protein localises to the cytoplasmic vesicle. Its subcellular location is the secretory vesicle membrane. Probably involved in membrane trafficking. The chain is Secretory carrier-associated membrane protein (PSAM2) from Pisum sativum (Garden pea).